Consider the following 312-residue polypeptide: Ribosomal protein L11 methyltransferase (312 aa).

Positions 160, 181, 203, and 246 each coordinate S-adenosyl-L-methionine.

Belongs to the methyltransferase superfamily. PrmA family.

It localises to the cytoplasm. It carries out the reaction L-lysyl-[protein] + 3 S-adenosyl-L-methionine = N(6),N(6),N(6)-trimethyl-L-lysyl-[protein] + 3 S-adenosyl-L-homocysteine + 3 H(+). Methylates ribosomal protein L11. The polypeptide is Ribosomal protein L11 methyltransferase (Staphylococcus saprophyticus subsp. saprophyticus (strain ATCC 15305 / DSM 20229 / NCIMB 8711 / NCTC 7292 / S-41)).